The sequence spans 31 residues: Protein YmiC (31 aa).

The helical transmembrane segment at 9 to 29 (WSWMGAFSLSMLFWAELLWII) threads the bilayer.

Its subcellular location is the cell inner membrane. In Escherichia coli (strain K12), this protein is Protein YmiC.